Here is a 1183-residue protein sequence, read N- to C-terminus: DNA-directed RNA polymerase subunit beta (1183 aa).

The span at 1151-1162 (EIEMADVDDEDA) shows a compositional bias: acidic residues. The segment at 1151–1183 (EIEMADVDDEDAAERKVDLQQKSAPESQKETTD) is disordered.

It belongs to the RNA polymerase beta chain family. As to quaternary structure, the RNAP catalytic core consists of 2 alpha, 1 beta, 1 beta' and 1 omega subunit. When a sigma factor is associated with the core the holoenzyme is formed, which can initiate transcription.

The enzyme catalyses RNA(n) + a ribonucleoside 5'-triphosphate = RNA(n+1) + diphosphate. Its function is as follows. DNA-dependent RNA polymerase catalyzes the transcription of DNA into RNA using the four ribonucleoside triphosphates as substrates. This is DNA-directed RNA polymerase subunit beta from Staphylococcus epidermidis (strain ATCC 12228 / FDA PCI 1200).